The sequence spans 291 residues: B3 domain-containing protein At2g16210 (291 aa).

Positions 19–114 (FFKVVQSINV…HFTVNIFKLD (96 aa)) form a DNA-binding region, TF-B3 1. Over residues 149–159 (VSSNRGQTTAA) the composition is skewed to polar residues. Positions 149 to 182 (VSSNRGQTTAAESKGRKLNLGKRAAKESQSSKRT) are disordered. Basic and acidic residues predominate over residues 172–182 (AAKESQSSKRT). A DNA-binding region (TF-B3 2) is located at residues 200–291 (AAAFTILFKQ…KELLLVVSKP (92 aa)).

The protein resides in the nucleus. The protein is B3 domain-containing protein At2g16210 of Arabidopsis thaliana (Mouse-ear cress).